The sequence spans 199 residues: Dephospho-CoA kinase (199 aa).

The 198-residue stretch at 2–199 (KIAVTGGYSS…FVADRIEKKK (198 aa)) folds into the DPCK domain. 10-15 (SSGKSS) contacts ATP.

This sequence belongs to the CoaE family.

It is found in the cytoplasm. It catalyses the reaction 3'-dephospho-CoA + ATP = ADP + CoA + H(+). The protein operates within cofactor biosynthesis; coenzyme A biosynthesis; CoA from (R)-pantothenate: step 5/5. Its function is as follows. Catalyzes the phosphorylation of the 3'-hydroxyl group of dephosphocoenzyme A to form coenzyme A. The protein is Dephospho-CoA kinase of Desulfotalea psychrophila (strain LSv54 / DSM 12343).